A 334-amino-acid chain; its full sequence is tRNA-cytidine(32) 2-sulfurtransferase (334 aa).

Positions 74–79 (SGGKDS) match the PP-loop motif motif. Cys149, Cys152, and Cys240 together coordinate [4Fe-4S] cluster.

Belongs to the TtcA family. Homodimer. It depends on Mg(2+) as a cofactor. [4Fe-4S] cluster is required as a cofactor.

It localises to the cytoplasm. The catalysed reaction is cytidine(32) in tRNA + S-sulfanyl-L-cysteinyl-[cysteine desulfurase] + AH2 + ATP = 2-thiocytidine(32) in tRNA + L-cysteinyl-[cysteine desulfurase] + A + AMP + diphosphate + H(+). It functions in the pathway tRNA modification. Functionally, catalyzes the ATP-dependent 2-thiolation of cytidine in position 32 of tRNA, to form 2-thiocytidine (s(2)C32). The sulfur atoms are provided by the cysteine/cysteine desulfurase (IscS) system. This is tRNA-cytidine(32) 2-sulfurtransferase from Burkholderia ambifaria (strain ATCC BAA-244 / DSM 16087 / CCUG 44356 / LMG 19182 / AMMD) (Burkholderia cepacia (strain AMMD)).